Here is a 79-residue protein sequence, read N- to C-terminus: ATP synthase subunit c (79 aa).

2 helical membrane-spanning segments follow: residues 11-31 (MAAA…IGIL) and 53-73 (FFIV…LGLY).

The protein belongs to the ATPase C chain family. As to quaternary structure, F-type ATPases have 2 components, F(1) - the catalytic core - and F(0) - the membrane proton channel. F(1) has five subunits: alpha(3), beta(3), gamma(1), delta(1), epsilon(1). F(0) has three main subunits: a(1), b(2) and c(10-14). The alpha and beta chains form an alternating ring which encloses part of the gamma chain. F(1) is attached to F(0) by a central stalk formed by the gamma and epsilon chains, while a peripheral stalk is formed by the delta and b chains.

It is found in the cell inner membrane. In terms of biological role, f(1)F(0) ATP synthase produces ATP from ADP in the presence of a proton or sodium gradient. F-type ATPases consist of two structural domains, F(1) containing the extramembraneous catalytic core and F(0) containing the membrane proton channel, linked together by a central stalk and a peripheral stalk. During catalysis, ATP synthesis in the catalytic domain of F(1) is coupled via a rotary mechanism of the central stalk subunits to proton translocation. Key component of the F(0) channel; it plays a direct role in translocation across the membrane. A homomeric c-ring of between 10-14 subunits forms the central stalk rotor element with the F(1) delta and epsilon subunits. The protein is ATP synthase subunit c of Citrobacter koseri (strain ATCC BAA-895 / CDC 4225-83 / SGSC4696).